The sequence spans 396 residues: NADH-quinone oxidoreductase subunit D 2 (396 aa).

Belongs to the complex I 49 kDa subunit family. As to quaternary structure, NDH-1 is composed of 14 different subunits. Subunits NuoB, C, D, E, F, and G constitute the peripheral sector of the complex.

It localises to the cell inner membrane. It catalyses the reaction a quinone + NADH + 5 H(+)(in) = a quinol + NAD(+) + 4 H(+)(out). Its function is as follows. NDH-1 shuttles electrons from NADH, via FMN and iron-sulfur (Fe-S) centers, to quinones in the respiratory chain. The immediate electron acceptor for the enzyme in this species is believed to be ubiquinone. Couples the redox reaction to proton translocation (for every two electrons transferred, four hydrogen ions are translocated across the cytoplasmic membrane), and thus conserves the redox energy in a proton gradient. The chain is NADH-quinone oxidoreductase subunit D 2 from Beijerinckia indica subsp. indica (strain ATCC 9039 / DSM 1715 / NCIMB 8712).